The chain runs to 453 residues: tRNA modification GTPase MnmE (453 aa).

Positions 22, 79, and 119 each coordinate (6S)-5-formyl-5,6,7,8-tetrahydrofolate. Residues 215–376 (GMKVVIAGRP…LKAHLKSLMG (162 aa)) form the TrmE-type G domain. Asn225 serves as a coordination point for K(+). GTP is bound by residues 225–230 (NAGKSS), 244–250 (TEIAGTT), 269–272 (DTAG), and 334–337 (NKAD). Residue Ser229 participates in Mg(2+) binding. Positions 244, 246, and 249 each coordinate K(+). Thr250 is a binding site for Mg(2+). Position 453 (Lys453) interacts with (6S)-5-formyl-5,6,7,8-tetrahydrofolate.

The protein belongs to the TRAFAC class TrmE-Era-EngA-EngB-Septin-like GTPase superfamily. TrmE GTPase family. Homodimer. Heterotetramer of two MnmE and two MnmG subunits. Requires K(+) as cofactor.

The protein localises to the cytoplasm. Functionally, exhibits a very high intrinsic GTPase hydrolysis rate. Involved in the addition of a carboxymethylaminomethyl (cmnm) group at the wobble position (U34) of certain tRNAs, forming tRNA-cmnm(5)s(2)U34. The chain is tRNA modification GTPase MnmE from Shewanella loihica (strain ATCC BAA-1088 / PV-4).